The sequence spans 131 residues: D-ribose pyranase (131 aa).

Catalysis depends on His20, which acts as the Proton donor. Residues Asp28, His98, and 120–122 (YAN) each bind substrate.

It belongs to the RbsD / FucU family. RbsD subfamily. As to quaternary structure, homodecamer.

It localises to the cytoplasm. It catalyses the reaction beta-D-ribopyranose = beta-D-ribofuranose. It functions in the pathway carbohydrate metabolism; D-ribose degradation; D-ribose 5-phosphate from beta-D-ribopyranose: step 1/2. Functionally, catalyzes the interconversion of beta-pyran and beta-furan forms of D-ribose. This is D-ribose pyranase from Bacillus velezensis (strain DSM 23117 / BGSC 10A6 / LMG 26770 / FZB42) (Bacillus amyloliquefaciens subsp. plantarum).